Here is a 163-residue protein sequence, read N- to C-terminus: uncharacterized protein (163 aa).

2 helical membrane passes run 7 to 27 (YLNE…CYIV) and 51 to 71 (LVIF…LVWF).

The protein resides in the cell membrane. This is an uncharacterized protein from Rickettsia prowazekii (strain Madrid E).